Reading from the N-terminus, the 297-residue chain is Beta-1,3-galactosyltransferase 5 (297 aa).

Over 1–7 (MAFPKMR) the chain is Cytoplasmic. The chain crosses the membrane as a helical; Signal-anchor for type II membrane protein span at residues 8–28 (LMYVCLLVLGALCVYFSMYSL). Residues 29 to 297 (NLFKEQSFVY…KPRTLLDYWQ (269 aa)) are Lumenal-facing. N-linked (GlcNAc...) asparagine glycosylation is found at N130, N174, and N231.

It belongs to the glycosyltransferase 31 family.

The protein localises to the golgi apparatus membrane. The enzyme catalyses a globoside Gb4Cer (d18:1(4E)) + UDP-alpha-D-galactose = a globoside GalGb4Cer (d18:1(4E)) + UDP + H(+). Its pathway is protein modification; protein glycosylation. Its function is as follows. Catalyzes the transfer of Gal to GlcNAc-based acceptors with a preference for the core3 O-linked glycan GlcNAc(beta1,3)GalNAc structure. Can use glycolipid LC3Cer as an efficient acceptor. The polypeptide is Beta-1,3-galactosyltransferase 5 (B3GALT5) (Pan troglodytes (Chimpanzee)).